Consider the following 149-residue polypeptide: uncharacterized protein (149 aa).

Disordered stretches follow at residues 24–74 and 129–149; these read TSQG…NDLE and AIQD…PRAP. The span at 28–42 shows a compositional bias: basic and acidic residues; that stretch reads EDVKPEPKPEVDEKV. The stretch at 102–131 forms a coiled coil; it reads SELESLKEKVSSATSMEELREIMEEFRAIQ.

This is an uncharacterized protein from Archaeoglobus fulgidus (strain ATCC 49558 / DSM 4304 / JCM 9628 / NBRC 100126 / VC-16).